A 256-amino-acid chain; its full sequence is MVSWMISRSVVLVFGNLYPAYYSYKAVKTKNVKEYVRWMMYWIVFALFTVVETVADLTIAWFPLYYEIKIAFVIWLLSPYTRGASVIYRKALHPLLSSKEREIDDYIVQAKERSYETMVNFGKQGLTIAATAAVSAAVKGQGAITEKLRSFSMHDLTQIPQDDGYSSYASNPARRAIMDQPDGAEYYHGDDDDRSDEDSKPVFSEDEAVSHHGLRRSQSVKVTRSKLRRDARYGSLKIKGRKRPGINATTYSNMES.

3 helical membrane passes run 1–21 (MVSW…YPAY), 42–62 (WIVF…IAWF), and 68–88 (IKIA…SVIY). The interval 177-256 (IMDQPDGAEY…NATTYSNMES (80 aa)) is disordered. The span at 247–256 (NATTYSNMES) shows a compositional bias: polar residues.

It belongs to the DP1 family.

The protein localises to the endoplasmic reticulum membrane. In terms of biological role, microtubule-binding protein required to ensure proper cell division and nuclear envelope reassembly by sequestering the endoplasmic reticulum away from chromosomes during mitosis. Probably acts by clearing the endoplasmic reticulum membrane from metaphase chromosomes. The sequence is that of Receptor expression-enhancing protein 3 (reep3) from Danio rerio (Zebrafish).